Here is a 492-residue protein sequence, read N- to C-terminus: Rab5 GDP/GTP exchange factor (492 aa).

The tract at residues 1 to 74 (MSLKSERRGI…EEEAFASSQS (74 aa)) is interaction with ubiquitinated proteins. The A20-type zinc finger occupies 13–47 (DQSELLCKKGCGYYGNPAWQGFCSKCWREEYHKAR). Residues Cys-19, Cys-23, Cys-35, and Cys-38 each contribute to the Zn(2+) site. Residues 66–85 (EEAFASSQSSQGAQSLTFSK) are disordered. Low complexity predominate over residues 69–84 (FASSQSSQGAQSLTFS). Ser-125 and Ser-133 each carry phosphoserine. N6-acetyllysine occurs at positions 152 and 171. In terms of domain architecture, VPS9 spans 233–376 (EKKDLAIQKR…IEKLDAQSLN (144 aa)). Phosphoserine is present on residues Ser-374, Ser-378, Ser-391, and Ser-401. Residues 408–449 (VKQMYKNLDLLSQLNERQERIMNEAKKLEKDLIDWTDGIAKE) adopt a coiled-coil conformation. Residues 471-492 (IDSENVENDKLPPPLQPQVYAG) form a disordered region.

As to quaternary structure, heterodimer with RABEP1. The heterodimer binds RAB4A and RAB5A that have been activated by GTP-binding. Binds TSC2, GGA1, GGA2, GGA3, AP1G1 and AP1G2. Interacts with RAB21, and with 100-fold lower affinity also with RAB22. Interacts with ubiquitinated EGFR. Interacts with RGS14; the interaction is GTP-dependent. Post-translationally, monoubiquitinated. As to expression, detected in brain.

It is found in the cytoplasm. Its subcellular location is the early endosome. The protein resides in the recycling endosome. In terms of biological role, rab effector protein acting as linker between gamma-adaptin and RAB5A. Involved in endocytic membrane fusion and membrane trafficking of recycling endosomes. Stimulates nucleotide exchange on RAB5A. Can act as a ubiquitin ligase. This chain is Rab5 GDP/GTP exchange factor (RABGEF1), found in Bos taurus (Bovine).